The chain runs to 129 residues: Lysozyme C (129 aa).

Residues 1–129 (KVYGRCELAA…VHAWIRGCRL (129 aa)) form the C-type lysozyme domain. 4 disulfide bridges follow: C6–C127, C30–C115, C64–C80, and C76–C94. Catalysis depends on residues E35 and D52.

This sequence belongs to the glycosyl hydrolase 22 family. As to quaternary structure, monomer.

The protein resides in the secreted. The enzyme catalyses Hydrolysis of (1-&gt;4)-beta-linkages between N-acetylmuramic acid and N-acetyl-D-glucosamine residues in a peptidoglycan and between N-acetyl-D-glucosamine residues in chitodextrins.. Functionally, lysozymes have primarily a bacteriolytic function; those in tissues and body fluids are associated with the monocyte-macrophage system and enhance the activity of immunoagents. This is Lysozyme C (LYZ) from Lophophorus impejanus (Himalayan monal pheasant).